We begin with the raw amino-acid sequence, 195 residues long: Ribosomal RNA small subunit methyltransferase G (195 aa).

S-adenosyl-L-methionine is bound by residues G60, L65, 114 to 115, and R128; that span reads IE.

This sequence belongs to the methyltransferase superfamily. RNA methyltransferase RsmG family.

Its subcellular location is the cytoplasm. The enzyme catalyses guanosine(527) in 16S rRNA + S-adenosyl-L-methionine = N(7)-methylguanosine(527) in 16S rRNA + S-adenosyl-L-homocysteine. Functionally, specifically methylates the N7 position of guanine in position 527 of 16S rRNA. This is Ribosomal RNA small subunit methyltransferase G from Dinoroseobacter shibae (strain DSM 16493 / NCIMB 14021 / DFL 12).